A 74-amino-acid chain; its full sequence is uncharacterized protein (74 aa).

This is an uncharacterized protein from Methanocaldococcus jannaschii (strain ATCC 43067 / DSM 2661 / JAL-1 / JCM 10045 / NBRC 100440) (Methanococcus jannaschii).